Consider the following 262-residue polypeptide: VPS74-like protein DDB_G0288371 (262 aa).

This sequence belongs to the GOLPH3/VPS74 family.

The protein resides in the golgi apparatus. Its subcellular location is the golgi stack membrane. Phosphatidylinositol-4-phosphate-binding protein that links Golgi membranes to the cytoskeleton and may participate in the tensile force required for vesicle budding from the Golgi. Thereby, may play a role in Golgi membrane trafficking. May also bind to the coatomer to regulate Golgi membrane trafficking. May play a role in anterograde transport from the Golgi to the plasma membrane and regulate secretion. May be involved in vacuolar protein sorting. In Dictyostelium discoideum (Social amoeba), this protein is VPS74-like protein DDB_G0288371.